A 489-amino-acid polypeptide reads, in one-letter code: Coronin-1B (489 aa).

S2 is subject to Phosphoserine. 5 WD repeats span residues 80-120 (GHTG…LTSP), 130-170 (GHTK…ELYR), 174-213 (LHPD…LVAE), 217-260 (AHEG…EPMA), and 265-305 (DSSN…PYIH). A disordered region spans residues 414–443 (DSRPAMAPGSSRLGAPASTTAAADATPSGS). Positions 427–443 (GAPASTTAAADATPSGS) are enriched in low complexity. Residues 449–474 (EAGKLEEVMQELRALRALVKEQGERI) are a coiled coil.

This sequence belongs to the WD repeat coronin family. Forms homooligomers, but does not form complexes with the other coronins. Interacts with Arp2/3 complex components, including ACTR2, ARPC1B and ARPC2. Binds actin. Post-translationally, phosphorylation on Ser-2 regulates the interaction with the Arp2/3 complex and cell motility in fibroblasts. Phosphorylation does not seem to affect subcellular location.

The protein resides in the cytoplasm. The protein localises to the cytoskeleton. Its subcellular location is the stress fiber. Functionally, regulates leading edge dynamics and cell motility in fibroblasts. May be involved in cytokinesis and signal transduction. This chain is Coronin-1B (CORO1B), found in Pongo abelii (Sumatran orangutan).